The sequence spans 443 residues: 2-hydroxyethylphosphonate dioxygenase (443 aa).

Residues 8 to 63 (LAHWMNARKYTAAQTADLAGLPLDDLRRLLGDEANEPDPAAATALAEALSVEPSQL) form the HTH cro/C1-type 1 domain. Residue lysine 16 participates in substrate binding. Residues 19–38 (AAQTADLAGLPLDDLRRLLG) constitute a DNA-binding region (H-T-H motif). Residues tyrosine 98 and asparagine 126 each contribute to the substrate site. A Fe cation-binding site is contributed by histidine 129. Glutamate 176, histidine 182, and serine 196 together coordinate substrate. Histidine 182 serves as a coordination point for Fe cation. The 57-residue stretch at 234 to 290 (VLDLFLARRAHTRTSAAEAAGVPPADLEAALRSPASETGLTVLRTLGRALGFDYRVL) folds into the HTH cro/C1-type 2 domain. A DNA-binding region (H-T-H motif) is located at residues 245 to 265 (TRTSAAEAAGVPPADLEAALR).

This sequence belongs to the non-heme iron-dependent dioxygenase family. Homodimer. Requires Fe(2+) as cofactor.

It carries out the reaction 2-hydroxyethylphosphonate + O2 = hydroxymethylphosphonate + formate + H(+). Its pathway is secondary metabolite biosynthesis; bialaphos biosynthesis. Functionally, non-heme-dependent dioxygenase that catalyzes the conversion of 2-hydroxyethylphosphonate (HEP) to hydroxymethylphosphonate (HMP) in the biosynthesis of phosphinothricin tripeptide (PTT), also known as bialaphos (BA), a natural-product antibiotic and potent herbicide. PTT contains the unusual amino acid phosphinothricin attached to 2 alanine residues. Synthetic phosphinothricin (glufosinate) is a key component of commercial herbicides. The chain is 2-hydroxyethylphosphonate dioxygenase (hepD) from Streptomyces viridochromogenes (strain DSM 40736 / JCM 4977 / BCRC 1201 / Tue 494).